Reading from the N-terminus, the 242-residue chain is Ribosomal RNA large subunit methyltransferase E (242 aa).

Residues Gly-88, Trp-90, Asp-111, Asp-127, and Asp-151 each coordinate S-adenosyl-L-methionine. The active-site Proton acceptor is Lys-191.

Belongs to the class I-like SAM-binding methyltransferase superfamily. RNA methyltransferase RlmE family.

The protein localises to the cytoplasm. It carries out the reaction uridine(2552) in 23S rRNA + S-adenosyl-L-methionine = 2'-O-methyluridine(2552) in 23S rRNA + S-adenosyl-L-homocysteine + H(+). Its function is as follows. Specifically methylates the uridine in position 2552 of 23S rRNA at the 2'-O position of the ribose in the fully assembled 50S ribosomal subunit. The sequence is that of Ribosomal RNA large subunit methyltransferase E from Bartonella tribocorum (strain CIP 105476 / IBS 506).